The chain runs to 390 residues: LL-diaminopimelate aminotransferase (390 aa).

Tyrosine 13, glycine 38, lysine 102, tyrosine 126, and asparagine 176 together coordinate substrate. Pyridoxal 5'-phosphate-binding positions include 101-102 (SK), tyrosine 126, asparagine 176, tyrosine 207, and 235-237 (SVS). Lysine 238 is subject to N6-(pyridoxal phosphate)lysine. A pyridoxal 5'-phosphate-binding site is contributed by arginine 246. Arginine 364 contributes to the substrate binding site.

This sequence belongs to the class-I pyridoxal-phosphate-dependent aminotransferase family. LL-diaminopimelate aminotransferase subfamily. As to quaternary structure, homodimer. Pyridoxal 5'-phosphate serves as cofactor.

It carries out the reaction (2S,6S)-2,6-diaminopimelate + 2-oxoglutarate = (S)-2,3,4,5-tetrahydrodipicolinate + L-glutamate + H2O + H(+). The protein operates within amino-acid biosynthesis; L-lysine biosynthesis via DAP pathway; LL-2,6-diaminopimelate from (S)-tetrahydrodipicolinate (aminotransferase route): step 1/1. Functionally, involved in the synthesis of meso-diaminopimelate (m-DAP or DL-DAP), required for both lysine and peptidoglycan biosynthesis. Catalyzes the direct conversion of tetrahydrodipicolinate to LL-diaminopimelate. Is also able to catalyze the reverse reaction in vitro, i.e. the transamination of LL-diaminopimelate with 2-oxoglutarate to produce tetrahydrodipicolinate and glutamate. Can also use m-DAP instead of LL-DAP as the amino-group donor, and oxaloacetate instead of 2-oxoglutarate as the amino-group acceptor. The chain is LL-diaminopimelate aminotransferase from Moorella thermoacetica (strain ATCC 39073 / JCM 9320).